Reading from the N-terminus, the 1454-residue chain is ABC transporter G family member 43 (1454 aa).

A disordered region spans residues 23-47; the sequence is ARSLRDGDDPFRRSAAASRRDAGDD. Residues 25–44 show a composition bias toward basic and acidic residues; the sequence is SLRDGDDPFRRSAAASRRDA. An N-linked (GlcNAc...) asparagine glycan is attached at asparagine 163. The ABC transporter 1 domain occupies 170–444; it reads EGLVSLFISS…FESAGFRCPE (275 aa). 204–211 is a binding site for ATP; it reads GPPSSGKS. Asparagine 393 carries an N-linked (GlcNAc...) asparagine glycan. Positions 524-735 constitute an ABC transmembrane type-2 1 domain; the sequence is LKAVMSREWL…SNNALSVNEF (212 aa). Transmembrane regions (helical) follow at residues 540–560, 577–597, 613–630, 637–656, 659–679, and 684–704; these read FLFI…MTLF, VGAL…ELQL, FFPA…KVPL, LWIV…GRFF, FLAY…LGAI, and VVAN…GGFL. The N-linked (GlcNAc...) asparagine glycan is linked to asparagine 745. The chain crosses the membrane as a helical span at residues 775 to 795; that stretch reads IGAMIGFMIVFNILYLCALTF. Residues 804-823 form a disordered region; that stretch reads TVVSDDDTKSELEAESNQEQ. N-linked (GlcNAc...) asparagine glycans are attached at residues asparagine 829 and asparagine 832. The ABC transporter 2 domain occupies 852–1104; sequence LSFNHMNYYV…ILVEYFEAIP (253 aa). 897-904 lines the ATP pocket; it reads GVSGAGKT. N-linked (GlcNAc...) asparagine glycosylation occurs at asparagine 951. Residues 1178–1391 enclose the ABC transmembrane type-2 2 domain; that stretch reads QCVANTWKQF…TIYGVIASQF (214 aa). The next 7 membrane-spanning stretches (helical) occupy residues 1196-1216, 1236-1256, 1284-1304, 1314-1334, 1341-1361, 1372-1392, and 1423-1443; these read YNAM…TVFW, YAAV…VVSV, FCYS…MIGY, FLFF…MLVA, LAAV…GFII, WFYW…SQFA, and FLGY…FLFG.

It belongs to the ABC transporter superfamily. ABCG family. PDR (TC 3.A.1.205) subfamily. Specifically expressed in the vasculature of roots, stems, panicles, sheaths and leaves.

Its subcellular location is the cell membrane. Functionally, ABC transporter modulating cadmium (Cd) import, thus controlling Cd(2+) accumulation to prevent phytotoxicity. Confers high tolerance to Cd in yeast. Prevents leaf bacteria proliferation, such as Xanthomonas oryzae pv. oryzicola (Xoc) RS105 and X.oryzae pv. oryzae (Xoo) PXO99, by triggering Cd accumulation, which in turn impairs bacterial virulence factors. This is ABC transporter G family member 43 from Oryza sativa subsp. japonica (Rice).